A 206-amino-acid polypeptide reads, in one-letter code: Delta and osm-11 homolog protein 1 (206 aa).

The polypeptide is Delta and osm-11 homolog protein 1 (dos-1) (Caenorhabditis elegans).